The primary structure comprises 267 residues: 4-hydroxy-tetrahydrodipicolinate reductase (267 aa).

G8–M13 is a binding site for NAD(+). R35 contributes to the NADP(+) binding site. Residues G98–T100 and A122–Y125 contribute to the NAD(+) site. The active-site Proton donor/acceptor is H155. H156 contributes to the (S)-2,3,4,5-tetrahydrodipicolinate binding site. K159 (proton donor) is an active-site residue. G165–T166 is a (S)-2,3,4,5-tetrahydrodipicolinate binding site.

This sequence belongs to the DapB family.

The protein localises to the cytoplasm. The catalysed reaction is (S)-2,3,4,5-tetrahydrodipicolinate + NAD(+) + H2O = (2S,4S)-4-hydroxy-2,3,4,5-tetrahydrodipicolinate + NADH + H(+). The enzyme catalyses (S)-2,3,4,5-tetrahydrodipicolinate + NADP(+) + H2O = (2S,4S)-4-hydroxy-2,3,4,5-tetrahydrodipicolinate + NADPH + H(+). Its pathway is amino-acid biosynthesis; L-lysine biosynthesis via DAP pathway; (S)-tetrahydrodipicolinate from L-aspartate: step 4/4. In terms of biological role, catalyzes the conversion of 4-hydroxy-tetrahydrodipicolinate (HTPA) to tetrahydrodipicolinate. The protein is 4-hydroxy-tetrahydrodipicolinate reductase of Pseudoalteromonas atlantica (strain T6c / ATCC BAA-1087).